The primary structure comprises 246 residues: Phosphomannomutase 2 (246 aa).

Residue Ala2 is modified to N-acetylalanine. The active-site Nucleophile is the Asp12. The Mg(2+) site is built by Asp12 and Asp14. The active-site Proton donor/acceptor is the Asp14. Residues Arg21, Arg123, Arg134, and Arg141 each coordinate alpha-D-mannose 1-phosphate. Lys149 is modified (N6-acetyllysine). Alpha-D-mannose 1-phosphate is bound by residues Ser179 and Asp181. Residues Asp209, Phe221, Asp223, and Thr226 each contribute to the Mg(2+) site.

It belongs to the eukaryotic PMM family. In terms of assembly, homodimer.

It is found in the cytoplasm. It catalyses the reaction alpha-D-mannose 1-phosphate = D-mannose 6-phosphate. The protein operates within nucleotide-sugar biosynthesis; GDP-alpha-D-mannose biosynthesis; alpha-D-mannose 1-phosphate from D-fructose 6-phosphate: step 2/2. Functionally, involved in the synthesis of the GDP-mannose and dolichol-phosphate-mannose required for a number of critical mannosyl transfer reactions. This chain is Phosphomannomutase 2 (PMM2), found in Homo sapiens (Human).